The following is a 255-amino-acid chain: Small ribosomal subunit protein uS10m (255 aa).

The transit peptide at 1 to 32 (MALPAARSALSARAFIRPAAALNAAASSSRYL) directs the protein to the mitochondrion. Disordered stretches follow at residues 30–52 (RYLSTTTPRHDAPVATTPGNSET) and 220–255 (SEGEGEDQAEGVQKIVDAAREEKPAEKLKEEEAKSS). Basic and acidic residues predominate over residues 236–255 (DAAREEKPAEKLKEEEAKSS).

Belongs to the universal ribosomal protein uS10 family. As to quaternary structure, part of the mitochondrial small ribosomal subunit.

It localises to the mitochondrion. Functionally, involved in mitochondrial genome encoded proteins translation. Involved in the binding of tRNA to the ribosomes. This Cryptococcus neoformans var. neoformans serotype D (strain B-3501A) (Filobasidiella neoformans) protein is Small ribosomal subunit protein uS10m (RSM10).